The following is a 1723-amino-acid chain: Lys-gingipain (1723 aa).

An N-terminal signal peptide occupies residues 1 to 24; it reads MRKLLLLIAASLLGVGLYAQSAKI. Positions 25 to 228 are excised as a propeptide; the sequence is KLDAPTTRTT…ETAYKQLFNR (204 aa). Ca(2+) contacts are provided by Asp-313, Asp-337, Asp-339, Phe-341, and Glu-343. His-444 acts as the Proton donor in catalysis. The active-site Nucleophile is Cys-477. The Ca(2+) site is built by Phe-482 and Glu-491. The disordered stretch occupies residues 964–985; that stretch reads WDAPNGTPNPNPNPNPGTTTLS. Ser-987, Glu-989, Asp-1000, Asp-1002, Asp-1004, His-1006, Ser-1021, Gly-1023, Asn-1042, Asp-1145, Glu-1146, Asp-1430, Glu-1432, Asp-1444, Asp-1446, Asp-1448, Asn-1450, Ser-1480, Asn-1495, and Asp-1585 together coordinate Ca(2+).

It belongs to the peptidase C25 family. Proteolytically cleaved into a catalytic subunit and three adhesins. Arg-gingipain is involved in this post-translational processing.

It localises to the secreted. The enzyme catalyses Endopeptidase with strict specificity for lysyl bonds.. Activated by the thiol-reducing agents cysteine, 2-mercaptoethanol and dithiothreitol. Inhibited by iodacetamide, iodoacetic acid, leupeptin, tosyl-L-lysine and tosyl-L-phenylalanine. Not inhibited by elastatinal, chymostatin, cystatins, alpha1-antichymotrypsin or the serine protease inhibitors phenylmethylsulfonyl fluoride and diisopropylfluorophosphate. Not inhibited by metal ion chelators. Inhibited by the heavy metal ions Fe(3+), Zn(2+), Cu(2+) and Mn(2+). In terms of biological role, cysteine proteinase with a strong preference for substrates with Lys in the P1 position. Hydrolyzes bovine hemoglobin, bovine serum albumin, casein, human placental type I collagen and human IgA and IgG. Disrupts the functions of polymorphonuclear leukocytes. May act as a virulence factor in the development of peridontal disease. Involved in the coaggregation of P.gingivalis with other oral bacteria. In Porphyromonas gingivalis (strain ATCC 33277 / DSM 20709 / CIP 103683 / JCM 12257 / NCTC 11834 / 2561), this protein is Lys-gingipain.